A 1679-amino-acid polypeptide reads, in one-letter code: [F-actin]-monooxygenase mical2b (1679 aa).

The segment at 2-494 (GETEEERTSQ…RHLFISGEQD (493 aa)) is monooxygenase domain. Residues Cys-97, 97 to 125 (CGFRTAIELALLGAKVVVIEKRDTFSRNN), Glu-116, Arg-118, Arg-123, Asn-125, and Asp-398 each bind FAD. Residues 516 to 619 (EVRPGRLLLW…MVLYLSKFYE (104 aa)) enclose the Calponin-homology (CH) domain. Positions 658-679 (RKRIPKLDKKLEESDVNRKRKK) match the Nuclear localization signal motif. 8 disordered regions span residues 661–772 (IPKL…KAKW), 818–838 (SAYKSSERRPRSPLIPFTPTL), 874–907 (SSLFTGNPAQPQTDESSPAVSPSSPPQTIPESST), 1073–1163 (STRH…RSTA), 1194–1247 (KPED…DEIP), 1259–1283 (EYPKPSSSSPEPIVTSISSDPISFS), 1302–1342 (DLTN…PAPP), and 1473–1509 (RNKASAQQQQQQKSNSSSEDEQEPKLTHSGALQKKKE). Composition is skewed to basic and acidic residues over residues 662–674 (PKLDKKLEESDVN) and 697–707 (GEREEQKENKV). Over residues 874–888 (SSLFTGNPAQPQTDE) the composition is skewed to polar residues. The LIM zinc-binding domain maps to 1011–1073 (DTCVFCQKRV…KMHFSQRKTS (63 aa)). Low complexity predominate over residues 1086-1099 (IRSSSITISNHTST). Polar residues predominate over residues 1112-1123 (DSSTQQDLQTLP). Residues 1133–1143 (EVKDSSKKADP) are compositionally biased toward basic and acidic residues. Residues 1144-1154 (ADSAPACPDSP) are compositionally biased toward low complexity. Acidic residues predominate over residues 1202–1211 (LAEEDGNSDF). Over residues 1220-1242 (SKKPSNPSTDSNCLPTKDNSSTP) the composition is skewed to polar residues. Low complexity predominate over residues 1259–1270 (EYPKPSSSSPEP). A compositionally biased stretch (polar residues) spans 1302-1325 (DLTNPGKSGAEEQQQQHVKPSISL). Over residues 1333–1342 (THPQPEPAPP) the composition is skewed to pro residues. A compositionally biased stretch (low complexity) spans 1475–1489 (KASAQQQQQQKSNSS). The bMERB domain occupies 1517–1667 (KSDELKRLHR…EKAEDRDLES (151 aa)).

This sequence belongs to the Mical family. FAD serves as cofactor.

The protein resides in the nucleus. It localises to the cytoplasm. The enzyme catalyses L-methionyl-[F-actin] + NADPH + O2 + H(+) = L-methionyl-(R)-S-oxide-[F-actin] + NADP(+) + H2O. In terms of biological role, nuclear monooxygenase that promotes depolymerization of F-actin by mediating oxidation of specific methionine residues on actin and regulates the srf signaling. Acts by modifying nuclear actin subunits through the addition of oxygen to form methionine-sulfoxide, leading to promote actin filament severing and prevent repolymerization. Acts as a key regulator of the srf signaling pathway elicited by nerve growth factor and serum: mediates oxidation and subsequent depolymerization of nuclear actin, leading to increase mkl1/mrtf-a presence in the nucleus and promote srf:mkl1/mrtf-a-dependent gene transcription. This chain is [F-actin]-monooxygenase mical2b, found in Danio rerio (Zebrafish).